The sequence spans 657 residues: Penicillin-binding protein activator LpoA (657 aa).

A signal peptide spans 1-25 (MLSSTFVRSKAGLVPVILAALILAA). C26 carries the N-palmitoyl cysteine lipid modification. The S-diacylglycerol cysteine moiety is linked to residue C26.

It belongs to the LpoA family. In terms of assembly, interacts with PBP1a.

The protein resides in the cell outer membrane. Functionally, regulator of peptidoglycan synthesis that is essential for the function of penicillin-binding protein 1A (PBP1a). The sequence is that of Penicillin-binding protein activator LpoA from Yersinia pseudotuberculosis serotype O:1b (strain IP 31758).